A 495-amino-acid chain; its full sequence is Amorpha-4,11-diene 12-monooxygenase (495 aa).

At M1–K6 the chain is on the cytoplasmic side. Residues A7 to A29 form a helical; Signal-anchor for type II membrane protein membrane-spanning segment. The Lumenal portion of the chain corresponds to T30 to F495. N176, N261, N267, N386, and N417 each carry an N-linked (GlcNAc...) asparagine glycan. Residue C439 participates in heme binding.

This sequence belongs to the cytochrome P450 family. Heme is required as a cofactor. In terms of tissue distribution, highly expressed both in apical and sub-apical cells of glandular secretory trichomes. Detected in flower buds, leaves and roots. Also present in non-glandular trichome cells.

Its subcellular location is the endoplasmic reticulum membrane. It catalyses the reaction (+)-amorpha-4,11-diene + 3 reduced [NADPH--hemoprotein reductase] + 3 O2 = (+)-artemisinate + 3 oxidized [NADPH--hemoprotein reductase] + 4 H2O + 4 H(+). Its pathway is sesquiterpene biosynthesis. In terms of biological role, involved in the biosynthesis of the antimalarial endoperoxide artemisinin. Catalyzes three consecutive oxidations of amorpha-4,11-diene to produce artemisinic acid, with artemisinic alcohol and artemisinic aldehyde as intermediates products, but is unable to oxidize germacrene A. No activity with limonene, alpha-pinene, beta-pinene, pinocarveol, (-)-alloisolongifolene, caryophyllene, (-)-alpha-gurjunene, (+)-gamma-gurjunene, (+)-ledene, (+)-beta-selinene and (+)-valencene as substrates. The sequence is that of Amorpha-4,11-diene 12-monooxygenase from Artemisia annua (Sweet wormwood).